Reading from the N-terminus, the 625-residue chain is Endoglucanase 13 (625 aa).

Residues 1–34 (MAATMNKTPATTFLLIPAAASLVLLLAAAASVEA) form the signal peptide. The active-site Nucleophile is aspartate 91. Histidine 427 is an active-site residue. Asparagine 440 carries N-linked (GlcNAc...) asparagine glycosylation. Residues aspartate 479 and glutamate 488 contribute to the active site. A disordered region spans residues 509–530 (ADNTPEYTPAPNAPSPSNGGSP).

It belongs to the glycosyl hydrolase 9 (cellulase E) family.

It localises to the secreted. The enzyme catalyses Endohydrolysis of (1-&gt;4)-beta-D-glucosidic linkages in cellulose, lichenin and cereal beta-D-glucans.. The protein is Endoglucanase 13 (GLU6) of Oryza sativa subsp. indica (Rice).